A 77-amino-acid polypeptide reads, in one-letter code: Omega-conotoxin-like 6 (77 aa).

The N-terminal stretch at 1-22 (MKLTCVVIIAVLLLTACQLITA) is a signal peptide. Positions 23 to 50 (DDSRGVQKHRSLRSTTKVSKSTSCMEAG) are excised as a propeptide. Cystine bridges form between C46–C61, C53–C64, and C60–C71.

It belongs to the conotoxin O1 superfamily. Expressed by the venom duct.

It is found in the secreted. Functionally, omega-conotoxins act at presynaptic membranes, they bind and block voltage-gated calcium channels (Cav). The polypeptide is Omega-conotoxin-like 6 (Conus striatus (Striated cone)).